A 302-amino-acid chain; its full sequence is Ribosomal RNA small subunit methyltransferase H (302 aa).

Residues glycine 36–histidine 38, aspartate 56, phenylalanine 84, aspartate 99, and glutamine 106 each bind S-adenosyl-L-methionine.

It belongs to the methyltransferase superfamily. RsmH family.

It localises to the cytoplasm. The enzyme catalyses cytidine(1402) in 16S rRNA + S-adenosyl-L-methionine = N(4)-methylcytidine(1402) in 16S rRNA + S-adenosyl-L-homocysteine + H(+). In terms of biological role, specifically methylates the N4 position of cytidine in position 1402 (C1402) of 16S rRNA. The chain is Ribosomal RNA small subunit methyltransferase H from Flavobacterium johnsoniae (strain ATCC 17061 / DSM 2064 / JCM 8514 / BCRC 14874 / CCUG 350202 / NBRC 14942 / NCIMB 11054 / UW101) (Cytophaga johnsonae).